We begin with the raw amino-acid sequence, 493 residues long: Cysteine--tRNA ligase (493 aa).

Cysteine 31 contributes to the Zn(2+) binding site. Positions 33–43 (PTVYGDAHLGH) match the 'HIGH' region motif. Zn(2+) is bound by residues cysteine 226, histidine 251, and glutamate 255. Positions 283 to 287 (KMGKS) match the 'KMSKS' region motif. Lysine 286 contacts ATP.

Belongs to the class-I aminoacyl-tRNA synthetase family. As to quaternary structure, monomer. The cofactor is Zn(2+).

The protein localises to the cytoplasm. The enzyme catalyses tRNA(Cys) + L-cysteine + ATP = L-cysteinyl-tRNA(Cys) + AMP + diphosphate. This is Cysteine--tRNA ligase from Phocaeicola vulgatus (strain ATCC 8482 / DSM 1447 / JCM 5826 / CCUG 4940 / NBRC 14291 / NCTC 11154) (Bacteroides vulgatus).